A 437-amino-acid chain; its full sequence is Elongation factor 1-gamma-B (437 aa).

The 86-residue stretch at 2–87 folds into the GST N-terminal domain; it reads AGGTLYTYPD…YVANDELRGS (86 aa). Residues 89–222 enclose the GST C-terminal domain; sequence NRLHQAQVIQ…KMAQFDAKKF (134 aa). Residues 225 to 240 are compositionally biased toward basic and acidic residues; that stretch reads VQPKKETPKKEKPAKE. The disordered stretch occupies residues 225 to 279; that stretch reads VQPKKETPKKEKPAKEPKKKKKKKKKATPAPAPAPEDDLDESEKALAAEPKSKDP. Positions 241 to 251 are enriched in basic residues; it reads PKKKKKKKKKA. The span at 266–279 shows a compositional bias: basic and acidic residues; it reads SEKALAAEPKSKDP. Residues 276 to 437 enclose the EF-1-gamma C-terminal domain; sequence SKDPYAHLPK…KAFNQGKIFK (162 aa).

As to quaternary structure, EF-1 is composed of four subunits: alpha, beta, delta, and gamma.

Functionally, probably plays a role in anchoring the complex to other cellular components. This is Elongation factor 1-gamma-B (eef1g-b) from Xenopus laevis (African clawed frog).